Reading from the N-terminus, the 306-residue chain is Glutamyl-Q tRNA(Asp) synthetase (306 aa).

L-glutamate is bound by residues arginine 4–serine 8 and glutamate 40. Residues proline 7–asparagine 17 carry the 'HIGH' region motif. Cysteine 92, cysteine 94, tyrosine 113, and cysteine 117 together coordinate Zn(2+). Residues tyrosine 180 and arginine 198 each contribute to the L-glutamate site. A 'KMSKS' region motif is present at residues arginine 236–arginine 240. Residue lysine 239 coordinates ATP.

Belongs to the class-I aminoacyl-tRNA synthetase family. GluQ subfamily. Zn(2+) is required as a cofactor.

Its function is as follows. Catalyzes the tRNA-independent activation of glutamate in presence of ATP and the subsequent transfer of glutamate onto a tRNA(Asp). Glutamate is transferred on the 2-amino-5-(4,5-dihydroxy-2-cyclopenten-1-yl) moiety of the queuosine in the wobble position of the QUC anticodon. This Corynebacterium efficiens (strain DSM 44549 / YS-314 / AJ 12310 / JCM 11189 / NBRC 100395) protein is Glutamyl-Q tRNA(Asp) synthetase.